Consider the following 194-residue polypeptide: Dihydrofolate reductase HdrB (194 aa).

Residues 18–194 (RFVLVAAVAD…ADRGAEESDE (177 aa)) enclose the DHFR domain. Residues A24 and 30–36 (VIGRDGT) each bind NADP(+). D44 is a substrate binding site. 62–63 (KT) contacts NADP(+). Residues R69 and R78 each coordinate substrate. Residues 84-85 (TT) and 123-130 (GGATVYEQ) each bind NADP(+). T141 contacts substrate. A disordered region spans residues 173–194 (SFVTYERKQPAAADRGAEESDE).

The protein belongs to the dihydrofolate reductase family.

The catalysed reaction is (6S)-5,6,7,8-tetrahydrofolate + NADP(+) = 7,8-dihydrofolate + NADPH + H(+). It participates in cofactor biosynthesis; tetrahydrofolate biosynthesis; 5,6,7,8-tetrahydrofolate from 7,8-dihydrofolate: step 1/1. Its activity is regulated as follows. Maximum activity at KCl concentration of 0.5 M and activity decreases with increasing concentration of KCl. In terms of biological role, key enzyme in folate metabolism. Catalyzes an essential reaction for de novo glycine and purine synthesis, and for DNA precursor synthesis. This chain is Dihydrofolate reductase HdrB (hdrB), found in Haloferax volcanii (Halobacterium volcanii).